A 248-amino-acid polypeptide reads, in one-letter code: Pulmonary surfactant-associated protein A2 (248 aa).

Positions 1–20 (MWLCPLALTLILMAASGAAC) are cleaved as a signal peptide. One can recognise a Collagen-like domain in the interval 28–100 (GSPGIPGTPG…AGERGPPGLP (73 aa)). A 4-hydroxyproline mark is found at proline 30, proline 33, proline 36, proline 42, proline 54, proline 57, proline 63, proline 67, and proline 70. Residues 33 to 101 (PGTPGSHGLP…GERGPPGLPA (69 aa)) are disordered. The span at 42 to 51 (PGRDGRDGVK) shows a compositional bias: basic and acidic residues. Residues 54–70 (PGPPGPMGPPGETPCPP) show a composition bias toward pro residues. The span at 71-82 (GNNGLPGAPGVP) shows a compositional bias: low complexity. Positions 84 to 93 (ERGEKGEAGE) are enriched in basic and acidic residues. Positions 132–248 (MTVGEKVFSS…LYSRLTICEF (117 aa)) constitute a C-type lectin domain. Intrachain disulfides connect cysteine 155-cysteine 246 and cysteine 224-cysteine 238. N-linked (GlcNAc...) asparagine glycosylation occurs at asparagine 207.

This sequence belongs to the SFTPA family. Oligomeric complex of 6 set of homotrimers. Post-translationally, N-acetylated.

Its subcellular location is the secreted. The protein localises to the extracellular space. The protein resides in the extracellular matrix. It localises to the surface film. Its function is as follows. In presence of calcium ions, it binds to surfactant phospholipids and contributes to lower the surface tension at the air-liquid interface in the alveoli of the mammalian lung and is essential for normal respiration. This is Pulmonary surfactant-associated protein A2 (SFTPA2) from Homo sapiens (Human).